The chain runs to 563 residues: Inorganic phosphate transporter PT2 (563 aa).

Disordered regions lie at residues 1-51 (MAPR…SGEE) and 67-96 (DGGANGVTYPVGGSRKEQDEISSRGPPAYS). Residues 1–127 (MAPRYHSAAE…NGEKQSLLVP (127 aa)) lie on the Extracellular side of the membrane. Residues 128–148 (CLAVFSSNYNFTVTSIALFLM) traverse the membrane as a helical segment. At 149-168 (NQDPLYKDASDTVVGSSTVK) the chain is on the cytoplasmic side. The chain crosses the membrane as a helical span at residues 169 to 189 (MLSYAGAIVGMCTMGYLGDLI). Topologically, residues 190–192 (GRR) are extracellular. A helical transmembrane segment spans residues 193–213 (LAMILTLALVFIGALLSSICA). Residues 214-217 (WGDG) lie on the Cytoplasmic side of the membrane. Residues 218–238 (VTVLVIMGVCRFVLGVGSGGV) form a helical membrane-spanning segment. The Extracellular segment spans residues 239–263 (YPLSAVSAAEGAGSEKSNDRSMRVS). Residues 264–284 (WAYSMNVPGIMFPYIVALVLW) traverse the membrane as a helical segment. The Cytoplasmic segment spans residues 285 to 291 (CTTHNVD). Residues 292–312 (VCFRILLGFGALPALLIWLPA) form a helical membrane-spanning segment. Residues 313–342 (WRMKEDRAYVAKDFAKHLAGVFVSRSYWRQ) are Extracellular-facing. A helical transmembrane segment spans residues 343–363 (LLGTGVCWLLYDVTAYGILLV). Residues 364–380 (QPEITQSIWGNSSSVTD) lie on the Cytoplasmic side of the membrane. Residues 381–401 (VIWQNIILNGMGIPGCFMGIL) form a helical membrane-spanning segment. Over 402 to 412 (VLKQMGVKWLQ) the chain is Extracellular. A helical transmembrane segment spans residues 413 to 433 (FWGFVGLAVSAFLMAATVEIL). Topologically, residues 434–440 (QGKAWAQ) are cytoplasmic. A helical transmembrane segment spans residues 441-461 (LVLLCIVNFFINWGASITTFI). The Extracellular segment spans residues 462 to 477 (LPSLVFPPEVRSTYSG). The chain crosses the membrane as a helical span at residues 478-498 (ISAALGKIGAVGGIYTMKAIL). Residues 499 to 504 (STGGLT) are Cytoplasmic-facing. The chain crosses the membrane as a helical span at residues 505–525 (PMMICAGVPSLAAAILTWFYV). The Extracellular segment spans residues 526–563 (DPVPNTLRSSFLQCFGSLAGSCPFIDCRKFRRGSRAFE).

Belongs to the major facilitator superfamily. Phosphate:H(+) symporter (TC 2.A.1.9) family.

It is found in the cell membrane. It carries out the reaction phosphate(in) = phosphate(out). Its function is as follows. Inorganic phosphate transporter. Activity is likely sodium-independent. Exhibits higher activity under acidic pH, implying that either the monovalent form of phosphate is the preferred substrate or the transport activity is H(+)-dependent. This Toxoplasma gondii (strain ATCC 50861 / VEG) protein is Inorganic phosphate transporter PT2.